A 61-amino-acid polypeptide reads, in one-letter code: Small ribosomal subunit protein uS14 (61 aa).

Zn(2+) contacts are provided by Cys24, Cys27, Cys40, and Cys43.

This sequence belongs to the universal ribosomal protein uS14 family. Zinc-binding uS14 subfamily. In terms of assembly, part of the 30S ribosomal subunit. Contacts proteins S3 and S10. Zn(2+) serves as cofactor.

Its function is as follows. Binds 16S rRNA, required for the assembly of 30S particles and may also be responsible for determining the conformation of the 16S rRNA at the A site. The chain is Small ribosomal subunit protein uS14 from Macrococcus caseolyticus (strain JCSC5402) (Macrococcoides caseolyticum).